A 2113-amino-acid polypeptide reads, in one-letter code: Unconventional myosin-VIIb (2113 aa).

A Myosin motor domain is found at glutamine 65–serine 760. Glycine 158–threonine 165 lines the ATP pocket. Residues leucine 637 to glutamate 659 are actin-binding. IQ domains lie at isoleucine 745 to glycine 765, leucine 763 to threonine 792, glutamine 786 to arginine 815, isoleucine 809 to glutamine 838, methionine 832 to isoleucine 861, and lysine 855 to glutamine 884. The residue at position 904 (serine 904) is a Phosphoserine. The mediates interaction with ANKS4B stretch occupies residues glutamate 962–methionine 1578. The region spanning histidine 989–lysine 1189 is the MyTH4 1 domain. An FERM 1 domain is found at isoleucine 1194 to alanine 1503. Threonine 1339 carries the phosphothreonine modification. Serine 1368 carries the phosphoserine modification. The segment at lysine 1497 to proline 2113 is mediates interaction with CDHR2, CDHR5 and USH1C. The SH3 domain occupies glutamate 1498–serine 1564. 2 MyTH4 domains span residues tyrosine 1641 to glutamate 1790 and glutamate 1790 to threonine 1896. Serine 1642 is subject to Phosphoserine. Residues leucine 1796–valine 2099 form the FERM 2 domain.

Belongs to the TRAFAC class myosin-kinesin ATPase superfamily. Myosin family. As to quaternary structure, part of the IMAC/intermicrovillar adhesion complex/intermicrovillar tip-link complex composed of ANKS4B, MYO7B, USH1C, CDHR2 and CDHR5. Interacts with CDHR2. Interacts with CDHR5. Interacts with USH1C. Interacts with ANKS4B; requires initial interaction with USH1C. Interacts with CALML4; the interaction mediates the association of CALML4 with the IMAC/intermicrovillar adhesion complex. As to expression, expressed primarily in kidney and intestine. Detected in proximal tubule cells of the kidney and enterocytes of the intestine, specifically the distal tips of apical microvilli on these transporting epithelial cells (at protein level).

The protein resides in the cytoplasm. It is found in the cytoskeleton. It localises to the cell projection. Its subcellular location is the microvillus. In terms of biological role, myosins are actin-based motor molecules with ATPase activity. Their highly divergent tails are presumed to bind to membranous compartments, which would be moved relative to actin filaments. As part of the intermicrovillar adhesion complex/IMAC plays a role in epithelial brush border differentiation, controlling microvilli organization and length. May link the complex to the actin core bundle of microvilli. The polypeptide is Unconventional myosin-VIIb (Myo7b) (Mus musculus (Mouse)).